The following is a 1531-amino-acid chain: Multidrug resistance-associated protein 1 (1531 aa).

Residues 1 to 33 lie on the Extracellular side of the membrane; sequence MALRGFCSADGSDPLWDWNVTWNTSNPDFTKCF. N-linked (GlcNAc...) asparagine glycans are attached at residues N19 and N23. The chain crosses the membrane as a helical span at residues 34–54; it reads QNTVLVWVPCFYLWACFPFYF. Residues 55–74 are Cytoplasmic-facing; that stretch reads LYLSRHDRGYIQMTPLNKTK. A helical transmembrane segment spans residues 75 to 95; it reads TALGFLLWIVCWADLFYSFWE. Residues 96–100 are Extracellular-facing; that stretch reads RSRGI. A helical membrane pass occupies residues 101–121; the sequence is FLAPVFLVSPTLLGITMLLAT. The Cytoplasmic segment spans residues 122 to 133; the sequence is FLIQLERRKGVQ. Residues 134–154 traverse the membrane as a helical segment; sequence SSGIMLTFWLVALVCALAILR. The Extracellular portion of the chain corresponds to 155 to 172; the sequence is SKIMTALKEDAQVDLFRD. Residues 173 to 193 form a helical membrane-spanning segment; sequence ITFYVYFSLLLIQLVLSCFSD. Residues 194–316 lie on the Cytoplasmic side of the membrane; it reads RSPLFSETIH…KEWNPSLFKV (123 aa). Residue Y277 is modified to Phosphotyrosine. A Phosphoserine modification is found at S289. A helical membrane pass occupies residues 317-337; sequence LYKTFGPYFLMSFFFKAIHDL. The 284-residue stretch at 325-608 folds into the ABC transmembrane type-1 1 domain; it reads FLMSFFFKAI…LPMVISSIVQ (284 aa). The Extracellular portion of the chain corresponds to 338-363; that stretch reads MMFSGPQILKLLIKFVNDTKAPDWQG. A helical transmembrane segment spans residues 364 to 384; sequence YFYTVLLFVTACLQTLVLHQY. At 385-440 the chain is on the cytoplasmic side; the sequence is FHICFVSGMRIKTAVIGAVYRKALVITNSARKSSTVGEIVNLMSVDAQRFMDLATY. Residues 441-461 traverse the membrane as a helical segment; sequence INMIWSAPLQVILALYLLWLN. The Extracellular portion of the chain corresponds to 462-464; it reads LGP. A helical transmembrane segment spans residues 465–485; the sequence is SVLAGVAVMVLMVPVNAVMAM. The Cytoplasmic segment spans residues 486-547; that stretch reads KTKTYQVAHM…VLKKSAYLSA (62 aa). An N6-succinyllysine modification is found at K503. The helical transmembrane segment at 548–568 threads the bilayer; sequence VGTFTWVCTPFLVALCTFAVY. The Extracellular portion of the chain corresponds to 569-590; sequence VTIDENNILDAQTAFVSLALFN. The helical transmembrane segment at 591–611 threads the bilayer; the sequence is ILRFPLNILPMVISSIVQASV. At 612 to 967 the chain is on the cytoplasmic side; the sequence is SLKRLRIFLS…VKLSVYWDYM (356 aa). An ABC transporter 1 domain is found at 644 to 868; the sequence is ITVRNATFTW…DGAFAEFLRT (225 aa). Residues W653, 678–685, and Q713 each bind ATP; that span reads GQVGCGKS. S905, S915, and S930 each carry phosphoserine. A helical membrane pass occupies residues 968–988; it reads KAIGLFISFLSIFLFMCNHVS. The 282-residue stretch at 975–1256 folds into the ABC transmembrane type-1 2 domain; the sequence is SFLSIFLFMC…LVRMSSEMET (282 aa). Topologically, residues 989 to 1025 are extracellular; that stretch reads ALASNYWLSLWTDDPIVNGTQEHTKVRLSVYGALGIS. N-linked (GlcNAc...) asparagine glycosylation occurs at N1006. Residues 1026-1046 form a helical membrane-spanning segment; sequence QGIAVFGYSMAVSIGGILASR. Topologically, residues 1047–1089 are cytoplasmic; it reads CLHVDLLHSILRSPMSFFERTPSGNLVNRFSKELDTVDSMIPE. The helical transmembrane segment at 1090–1110 threads the bilayer; that stretch reads VIKMFMGSLFNVIGACIVILL. Position 1111 (A1111) is a topological domain, extracellular. A helical membrane pass occupies residues 1112-1132; it reads TPIAAIIIPPLGLIYFFVQRF. At 1133 to 1203 the chain is on the cytoplasmic side; that stretch reads YVASSRQLKR…VANRWLAVRL (71 aa). Residues 1204-1224 form a helical membrane-spanning segment; sequence ECVGNCIVLFAALFAVISRHS. The Extracellular segment spans residues 1225–1226; the sequence is LS. A helical membrane pass occupies residues 1227-1247; that stretch reads AGLVGLSVSYSLQVTTYLNWL. The Cytoplasmic portion of the chain corresponds to 1248-1531; that stretch reads VRMSSEMETN…YSMAKDAGLV (284 aa). Positions 1293–1527 constitute an ABC transporter 2 domain; it reads VEFRNYCLRY…RGLFYSMAKD (235 aa). Position 1327–1334 (1327–1334) interacts with ATP; sequence GRTGAGKS.

It belongs to the ABC transporter superfamily. ABCC family. Conjugate transporter (TC 3.A.1.208) subfamily. (Microbial infection) Interacts with human cytomegalovirus protein UL138; this interaction mediates MRP1 degradation via the lysosome. As to expression, lung, testis and peripheral blood mononuclear cells.

It is found in the cell membrane. The protein localises to the basolateral cell membrane. The catalysed reaction is ATP + H2O + xenobioticSide 1 = ADP + phosphate + xenobioticSide 2.. The enzyme catalyses an S-substituted glutathione(in) + ATP + H2O = an S-substituted glutathione(out) + ADP + phosphate + H(+). It catalyses the reaction sphing-4-enine 1-phosphate(in) + ATP + H2O = sphing-4-enine 1-phosphate(out) + ADP + phosphate + H(+). It carries out the reaction leukotriene C4(in) + ATP + H2O = leukotriene C4(out) + ADP + phosphate + H(+). The catalysed reaction is 17beta-estradiol 17-O-(beta-D-glucuronate)(in) + ATP + H2O = 17beta-estradiol 17-O-(beta-D-glucuronate)(out) + ADP + phosphate + H(+). The enzyme catalyses daunorubicin(in) + ATP + H2O = daunorubicin(out) + ADP + phosphate + H(+). It catalyses the reaction vincristine(in) + ATP + H2O = vincristine(out) + ADP + phosphate + H(+). It carries out the reaction 2',3'-cGAMP(in) + ATP + H2O = 2',3'-cGAMP(out) + ADP + phosphate + H(+). The catalysed reaction is S-[(2E,6E,10E)-geranylgeranyl]-L-glutathione(in) + ATP + H2O = S-[(2E,6E,10E)-geranylgeranyl]-L-glutathione(out) + ADP + phosphate + H(+). The enzyme catalyses prostaglandin A2-S-(R)-glutathione(in) + ATP + H2O = prostaglandin A2-S-(R)-glutathione(out) + ADP + phosphate + H(+). It catalyses the reaction prostaglandin A2-S-(S)-glutathione(in) + ATP + H2O = prostaglandin A2-S-(S)-glutathione(out) + ADP + phosphate + H(+). With respect to regulation, MK 571 inhibits sphingosine 1-phosphate and leukotriene C4 export. Mediates export of organic anions and drugs from the cytoplasm. Mediates ATP-dependent transport of glutathione and glutathione conjugates, leukotriene C4, estradiol-17-beta-o-glucuronide, methotrexate, antiviral drugs and other xenobiotics. Confers resistance to anticancer drugs by decreasing accumulation of drug in cells, and by mediating ATP- and GSH-dependent drug export. Hydrolyzes ATP with low efficiency. Catalyzes the export of sphingosine 1-phosphate from mast cells independently of their degranulation. Participates in inflammatory response by allowing export of leukotriene C4 from leukotriene C4-synthesizing cells. Mediates ATP-dependent, GSH-independent cyclic GMP-AMP (cGAMP) export. Thus, by limiting intracellular cGAMP concentrations negatively regulates the cGAS-STING pathway. Exports S-geranylgeranyl-glutathione (GGG) in lymphoid cells and stromal compartments of lymphoid organs. ABCC1 (via extracellular transport) with GGT5 (via GGG catabolism) establish GGG gradients within lymphoid tissues to position P2RY8-positive lymphocytes at germinal centers in lymphoid follicles and restrict their chemotactic transmigration from blood vessels to the bone marrow parenchyma. Mediates basolateral export of GSH-conjugated R- and S-prostaglandin A2 diastereomers in polarized epithelial cells. This chain is Multidrug resistance-associated protein 1, found in Homo sapiens (Human).